A 146-amino-acid polypeptide reads, in one-letter code: Hemoglobin subunit beta (146 aa).

N-acetylvaline is present on V1. One can recognise a Globin domain in the interval 2-146 (HLTGEEKSAV…VANALAHKYH (145 aa)). T12 carries the post-translational modification Phosphothreonine. Position 44 is a phosphoserine (S44). An N6-acetyllysine modification is found at K59. H63 lines the heme b pocket. K82 is modified (N6-acetyllysine). H92 is a binding site for heme b. C93 is subject to S-nitrosocysteine. The residue at position 144 (K144) is an N6-acetyllysine.

It belongs to the globin family. Heterotetramer of two alpha chains and two beta chains. In terms of tissue distribution, red blood cells.

Functionally, involved in oxygen transport from the lung to the various peripheral tissues. This Loris tardigradus (Slender loris) protein is Hemoglobin subunit beta (HBB).